A 172-amino-acid polypeptide reads, in one-letter code: Adenine phosphoribosyltransferase (172 aa).

It belongs to the purine/pyrimidine phosphoribosyltransferase family. In terms of assembly, homodimer.

The protein resides in the cytoplasm. It catalyses the reaction AMP + diphosphate = 5-phospho-alpha-D-ribose 1-diphosphate + adenine. The protein operates within purine metabolism; AMP biosynthesis via salvage pathway; AMP from adenine: step 1/1. Its function is as follows. Catalyzes a salvage reaction resulting in the formation of AMP, that is energically less costly than de novo synthesis. This Picosynechococcus sp. (strain ATCC 27264 / PCC 7002 / PR-6) (Agmenellum quadruplicatum) protein is Adenine phosphoribosyltransferase.